The primary structure comprises 595 residues: UvrABC system protein C (595 aa).

In terms of domain architecture, GIY-YIG spans Asn14 to Ile91. The 36-residue stretch at Asp196–Leu231 folds into the UVR domain.

This sequence belongs to the UvrC family. In terms of assembly, interacts with UvrB in an incision complex.

The protein resides in the cytoplasm. Functionally, the UvrABC repair system catalyzes the recognition and processing of DNA lesions. UvrC both incises the 5' and 3' sides of the lesion. The N-terminal half is responsible for the 3' incision and the C-terminal half is responsible for the 5' incision. The sequence is that of UvrABC system protein C from Streptococcus thermophilus (strain ATCC BAA-250 / LMG 18311).